We begin with the raw amino-acid sequence, 182 residues long: NADH-quinone oxidoreductase subunit I (182 aa).

4Fe-4S ferredoxin-type domains lie at Leu-52–Ala-82 and Asp-92–Asp-121. [4Fe-4S] cluster-binding residues include Cys-62, Cys-65, Cys-68, Cys-72, Cys-101, Cys-104, Cys-107, and Cys-111.

The protein belongs to the complex I 23 kDa subunit family. NDH-1 is composed of 13 different subunits. Subunits NuoA, H, J, K, L, M, N constitute the membrane sector of the complex. It depends on [4Fe-4S] cluster as a cofactor.

The protein resides in the cell inner membrane. The catalysed reaction is a quinone + NADH + 5 H(+)(in) = a quinol + NAD(+) + 4 H(+)(out). NDH-1 shuttles electrons from NADH, via FMN and iron-sulfur (Fe-S) centers, to quinones in the respiratory chain. The immediate electron acceptor for the enzyme in this species is believed to be ubiquinone. Couples the redox reaction to proton translocation (for every two electrons transferred, four hydrogen ions are translocated across the cytoplasmic membrane), and thus conserves the redox energy in a proton gradient. In Pseudomonas savastanoi pv. phaseolicola (strain 1448A / Race 6) (Pseudomonas syringae pv. phaseolicola (strain 1448A / Race 6)), this protein is NADH-quinone oxidoreductase subunit I.